The primary structure comprises 140 residues: MAIERTFSILKPDATARNLTGAINALIEKAGLRIVAQKRIRMTREQAETFYAVHKARPFFGELVDFMISGPVVVQVLEGENAVLKHREIMGATDPSKAADGTIRKLHATSVGENSVHGSDATETAAVEIAQFFSGNEIVG.

Residues Lys11, Phe59, Arg87, Thr93, Arg104, and Asn114 each contribute to the ATP site. His117 (pros-phosphohistidine intermediate) is an active-site residue.

This sequence belongs to the NDK family. In terms of assembly, homotetramer. Requires Mg(2+) as cofactor.

The protein localises to the cytoplasm. It catalyses the reaction a 2'-deoxyribonucleoside 5'-diphosphate + ATP = a 2'-deoxyribonucleoside 5'-triphosphate + ADP. It carries out the reaction a ribonucleoside 5'-diphosphate + ATP = a ribonucleoside 5'-triphosphate + ADP. In terms of biological role, major role in the synthesis of nucleoside triphosphates other than ATP. The ATP gamma phosphate is transferred to the NDP beta phosphate via a ping-pong mechanism, using a phosphorylated active-site intermediate. The sequence is that of Nucleoside diphosphate kinase from Nitrobacter hamburgensis (strain DSM 10229 / NCIMB 13809 / X14).